A 328-amino-acid polypeptide reads, in one-letter code: MSKKPVRVAVTGAAGQIGYALLFRIASGEMLGKDQPVILQLLEIPDEKAQKALKGVMMELDDCAFPLLAGMEAHGDPMTAFKDADYALLVGSRPRGPGMERAELLAVNGAIFTAQGKALNAVASRNVKVLVVGNPANTNAYIAMKSAPDLPRKNFTAMLRLDHNRAASQIAAKTGKAVADIEKLVVWGNHSPTMYADYRFATIKGESVAKMINDQEWNANTFLPTVGKRGAAIIEARGLSSAASAANAAIDHMRDWALGTNGKWVTMGIPSDGQYGIPKDTMFGFPVTCENGEYKLVEGLEIDAFSQERINKTLEELQGEQAGVAHLI.

Glycine 12–glycine 18 contacts NAD(+). Substrate contacts are provided by arginine 95 and arginine 101. NAD(+) is bound by residues asparagine 108, glutamine 115, and valine 132–asparagine 134. Substrate contacts are provided by asparagine 134 and arginine 165. The active-site Proton acceptor is the histidine 190.

Belongs to the LDH/MDH superfamily. MDH type 2 family.

It catalyses the reaction (S)-malate + NAD(+) = oxaloacetate + NADH + H(+). Its function is as follows. Catalyzes the reversible oxidation of malate to oxaloacetate. This is Malate dehydrogenase from Variovorax paradoxus (strain S110).